The chain runs to 156 residues: Small ribosomal subunit protein uS7 (156 aa).

It belongs to the universal ribosomal protein uS7 family. In terms of assembly, part of the 30S ribosomal subunit. Contacts proteins S9 and S11.

Its function is as follows. One of the primary rRNA binding proteins, it binds directly to 16S rRNA where it nucleates assembly of the head domain of the 30S subunit. Is located at the subunit interface close to the decoding center, probably blocks exit of the E-site tRNA. The polypeptide is Small ribosomal subunit protein uS7 (Bacillus mycoides (strain KBAB4) (Bacillus weihenstephanensis)).